The sequence spans 608 residues: Phosphogluconate dehydratase (608 aa).

Residues Cys-154 and Cys-221 each coordinate [4Fe-4S] cluster.

The protein belongs to the IlvD/Edd family. It depends on [4Fe-4S] cluster as a cofactor.

It catalyses the reaction 6-phospho-D-gluconate = 2-dehydro-3-deoxy-6-phospho-D-gluconate + H2O. Its pathway is carbohydrate metabolism; Entner-Doudoroff pathway. Functionally, catalyzes the dehydration of 6-phospho-D-gluconate to 2-dehydro-3-deoxy-6-phospho-D-gluconate. The sequence is that of Phosphogluconate dehydratase from Helicobacter pylori (strain ATCC 700392 / 26695) (Campylobacter pylori).